Here is a 693-residue protein sequence, read N- to C-terminus: ATP-dependent DNA helicase RecG (693 aa).

A wedge domain region spans residues 48–146 (THLYPIGELL…GDLSTPELQE (99 aa)). Residues 283-448 (DMALDVPMMR…AYADLDTSVI (166 aa)) enclose the Helicase ATP-binding domain. ATP is bound at residue 296–303 (GDVGSGKT). Positions 397–400 (DEQH) match the DEAH box motif. The Helicase C-terminal domain maps to 482–628 (EGRQAYWVCT…GFVIAQKDLE (147 aa)).

Belongs to the helicase family. RecG subfamily. Monomer in solution. Probably a monomer on HJ DNA. Binding to fork DNA is facilitated by SSB; the proteins do not seem to stably associate. Mg(2+) serves as cofactor.

The enzyme catalyses Couples ATP hydrolysis with the unwinding of duplex DNA by translocating in the 3'-5' direction.. It catalyses the reaction ATP + H2O = ADP + phosphate + H(+). Plays a critical role in recombination and DNA repair. Helps process Holliday junction (HJ) intermediates to mature products by catalyzing branch migration. Has replication fork regression activity, unwinds stalled or blocked replication forks to make a HJ that can be resolved by RuvC or RusA. Also rewinds unwound dsDNA in an ATP-dependent manner. Has double-stranded (ds)DNA unwinding activity characteristic of a DNA helicase with 3'-5' polarity in vitro on linear dsDNA; branched duplex DNA (Y-DNA) substrates adopt different conformations that influence which of the two arms are unwound. Binds and unwinds HJ and Y-DNA but not linear duplex DNA; binds no more than 10 nucleotides of ssDNA at a fork. Has a role in constitutive stable DNA replication (cSDR, DNA replication in the absence of protein synthesis) and R-loop (RNA annealed with dsDNA) formation. Unwinds R-loops but not RNA:DNA hybrids. Is genetically synergistic to RadA and RuvABC. In Escherichia coli (strain K12), this protein is ATP-dependent DNA helicase RecG.